A 121-amino-acid polypeptide reads, in one-letter code: Chorion protein S15 (121 aa).

A signal peptide spans 1 to 18 (MKYLFVCVSLALFAYISA).

It belongs to the chorion protein S15/S18 family.

It is found in the secreted. Chorion membrane (egg shell) protein; plays a role in protecting the egg from the environment. The protein is Chorion protein S15 (Cp15) of Drosophila subobscura (Fruit fly).